A 435-amino-acid chain; its full sequence is Adenylosuccinate lyase (435 aa).

N(6)-(1,2-dicarboxyethyl)-AMP-binding positions include 4–5 (RY), 73–75 (RHD), and 99–100 (TS). The active-site Proton donor/acceptor is the His-147. Gln-218 contributes to the N(6)-(1,2-dicarboxyethyl)-AMP binding site. Ser-268 (proton donor/acceptor) is an active-site residue. Residues Ser-269, 274 to 276 (KKN), Asn-282, and 313 to 317 (SAERV) contribute to the N(6)-(1,2-dicarboxyethyl)-AMP site.

This sequence belongs to the lyase 1 family. Adenylosuccinate lyase subfamily. As to quaternary structure, homotetramer. Residues from neighboring subunits contribute catalytic and substrate-binding residues to each active site.

The catalysed reaction is N(6)-(1,2-dicarboxyethyl)-AMP = fumarate + AMP. It catalyses the reaction (2S)-2-[5-amino-1-(5-phospho-beta-D-ribosyl)imidazole-4-carboxamido]succinate = 5-amino-1-(5-phospho-beta-D-ribosyl)imidazole-4-carboxamide + fumarate. It participates in purine metabolism; AMP biosynthesis via de novo pathway; AMP from IMP: step 2/2. Its pathway is purine metabolism; IMP biosynthesis via de novo pathway; 5-amino-1-(5-phospho-D-ribosyl)imidazole-4-carboxamide from 5-amino-1-(5-phospho-D-ribosyl)imidazole-4-carboxylate: step 2/2. Its function is as follows. Catalyzes two reactions in de novo purine nucleotide biosynthesis. Catalyzes the breakdown of 5-aminoimidazole- (N-succinylocarboxamide) ribotide (SAICAR or 2-[5-amino-1-(5-phospho-beta-D-ribosyl)imidazole-4-carboxamido]succinate) to 5-aminoimidazole-4-carboxamide ribotide (AICAR or 5-amino-1-(5-phospho-beta-D-ribosyl)imidazole-4-carboxamide) and fumarate, and of adenylosuccinate (ADS or N(6)-(1,2-dicarboxyethyl)-AMP) to adenosine monophosphate (AMP) and fumarate. This Deinococcus radiodurans (strain ATCC 13939 / DSM 20539 / JCM 16871 / CCUG 27074 / LMG 4051 / NBRC 15346 / NCIMB 9279 / VKM B-1422 / R1) protein is Adenylosuccinate lyase (purB).